The chain runs to 396 residues: Succinyl-CoA:mesaconate CoA-transferase (396 aa).

The Nucleophile role is filled by Asp175.

Belongs to the CoA-transferase III family. Homodimer.

The enzyme catalyses mesaconate + succinyl-CoA = 2-methylfumaryl-CoA + succinate. Shows highest activity at 4 M KCl. Does not require divalent ions for activity. Its function is as follows. Involved in the methylaspartate cycle. Catalyzes the transfer of the CoA moiety from succinyl-CoA to mesaconate to generate mesaconyl-CoA (2-methylfumaryl-CoA) and succinate. Also shows high activity with methylsuccinate as CoA-acceptor, and only low activity with glutarate, acrylate and itaconate. Cannot use other CoA donors like acetyl-CoA, propionyl-CoA, butyryl-CoA or acetoacetyl-CoA. The protein is Succinyl-CoA:mesaconate CoA-transferase of Haloarcula hispanica (strain ATCC 33960 / DSM 4426 / JCM 8911 / NBRC 102182 / NCIMB 2187 / VKM B-1755).